A 261-amino-acid chain; its full sequence is Indole-3-glycerol phosphate synthase (261 aa).

This sequence belongs to the TrpC family.

The enzyme catalyses 1-(2-carboxyphenylamino)-1-deoxy-D-ribulose 5-phosphate + H(+) = (1S,2R)-1-C-(indol-3-yl)glycerol 3-phosphate + CO2 + H2O. Its pathway is amino-acid biosynthesis; L-tryptophan biosynthesis; L-tryptophan from chorismate: step 4/5. This Alkaliphilus metalliredigens (strain QYMF) protein is Indole-3-glycerol phosphate synthase.